The chain runs to 264 residues: Cercarial protease (264 aa).

The signal sequence occupies residues 1 to 19 (MSNRWRFVVVVTLFTYCLT). Positions 20–27 (FERVSTWL) are excised as a propeptide. In terms of domain architecture, Peptidase S1 spans 28 to 264 (IRSGEPVQHP…RMLDFVRSNI (237 aa)). Residues C53 and C69 are joined by a disulfide bond. Active-site charge relay system residues include H68 and D126. A disulfide bridge links C192 with C202. Residue S218 is the Charge relay system of the active site.

It belongs to the peptidase S1 family. As to expression, acetabular (penetration) glands.

Its activity is regulated as follows. Activated by an autocatalytic mechanism. Its function is as follows. This protease cleaves elastin and thus facilitates penetration of schistosome parasite larvae through elastin-rich tissue of the host. This is Cercarial protease from Schistosoma mansoni (Blood fluke).